Consider the following 245-residue polypeptide: Small ribosomal subunit protein uS2 (245 aa).

Belongs to the universal ribosomal protein uS2 family.

The sequence is that of Small ribosomal subunit protein uS2 from Pseudomonas entomophila (strain L48).